The following is a 297-amino-acid chain: HTH-type transcriptional regulator ArgP (297 aa).

An HTH lysR-type domain is found at 4–60 (PDYRTLQALDAVIRERGFERAAQKLCITQSAVSQRIKQLENMFGQPLLVRTVPPRPT). Residues 21 to 40 (FERAAQKLCITQSAVSQRIK) constitute a DNA-binding region (H-T-H motif).

This sequence belongs to the LysR transcriptional regulatory family. As to quaternary structure, homodimer.

Controls the transcription of genes involved in arginine and lysine metabolism. The polypeptide is HTH-type transcriptional regulator ArgP (Escherichia coli O127:H6 (strain E2348/69 / EPEC)).